The following is a 238-amino-acid chain: ATP synthase subunit a (238 aa).

Helical transmembrane passes span 15–35 (IFNLTMLAMTLLIVGVIFVFI), 76–96 (YSLFFLCLFLFMVIANNLGLM), 111–131 (PTANLQYDLTLSFLVILLTHI), 167–187 (LALRIFGNIFAGEVMTSLLLL), and 208–230 (AFSVFISCIQAYVFTLLTSVYLG).

It belongs to the ATPase A chain family. As to quaternary structure, F-type ATPases have 2 components, CF(1) - the catalytic core - and CF(0) - the membrane proton channel. CF(1) has five subunits: alpha(3), beta(3), gamma(1), delta(1), epsilon(1). CF(0) has three main subunits: a(1), b(2) and c(9-12). The alpha and beta chains form an alternating ring which encloses part of the gamma chain. CF(1) is attached to CF(0) by a central stalk formed by the gamma and epsilon chains, while a peripheral stalk is formed by the delta and b chains.

Its subcellular location is the cell membrane. Its function is as follows. Key component of the proton channel; it plays a direct role in the translocation of protons across the membrane. In Streptococcus pneumoniae (strain ATCC BAA-255 / R6), this protein is ATP synthase subunit a.